The sequence spans 151 residues: Viral interleukin-17 (151 aa).

A signal peptide spans 1–22 (MTFRKTSLVLLLLLSIDCIVKS). N-linked (GlcNAc...) asparagine; by host glycans are attached at residues Asn36, Asn53, and Asn64. Disulfide bonds link Cys90–Cys140 and Cys95–Cys142.

This sequence belongs to the IL-17 family.

It is found in the secreted. This Saimiri sciureus (Common squirrel monkey) protein is Viral interleukin-17 (13).